The chain runs to 184 residues: UPF0149 protein PSEEN5316 (184 aa).

Belongs to the UPF0149 family.

This Pseudomonas entomophila (strain L48) protein is UPF0149 protein PSEEN5316.